The primary structure comprises 404 residues: 4-hydroxy-3-methylbut-2-enyl diphosphate reductase (404 aa).

Cysteine 66 contacts [4Fe-4S] cluster. Residue histidine 96 coordinates (2E)-4-hydroxy-3-methylbut-2-enyl diphosphate. Residue histidine 96 participates in dimethylallyl diphosphate binding. Histidine 96 serves as a coordination point for isopentenyl diphosphate. Cysteine 157 contacts [4Fe-4S] cluster. Position 185 (histidine 185) interacts with (2E)-4-hydroxy-3-methylbut-2-enyl diphosphate. Histidine 185 is a dimethylallyl diphosphate binding site. Histidine 185 contacts isopentenyl diphosphate. The active-site Proton donor is glutamate 187. (2E)-4-hydroxy-3-methylbut-2-enyl diphosphate is bound at residue threonine 250. Cysteine 288 contacts [4Fe-4S] cluster. Residues serine 317, serine 318, asparagine 319, and serine 380 each contribute to the (2E)-4-hydroxy-3-methylbut-2-enyl diphosphate site. Serine 317, serine 318, asparagine 319, and serine 380 together coordinate dimethylallyl diphosphate. 4 residues coordinate isopentenyl diphosphate: serine 317, serine 318, asparagine 319, and serine 380.

It belongs to the IspH family. The cofactor is [4Fe-4S] cluster.

The catalysed reaction is isopentenyl diphosphate + 2 oxidized [2Fe-2S]-[ferredoxin] + H2O = (2E)-4-hydroxy-3-methylbut-2-enyl diphosphate + 2 reduced [2Fe-2S]-[ferredoxin] + 2 H(+). It catalyses the reaction dimethylallyl diphosphate + 2 oxidized [2Fe-2S]-[ferredoxin] + H2O = (2E)-4-hydroxy-3-methylbut-2-enyl diphosphate + 2 reduced [2Fe-2S]-[ferredoxin] + 2 H(+). The protein operates within isoprenoid biosynthesis; dimethylallyl diphosphate biosynthesis; dimethylallyl diphosphate from (2E)-4-hydroxy-3-methylbutenyl diphosphate: step 1/1. It functions in the pathway isoprenoid biosynthesis; isopentenyl diphosphate biosynthesis via DXP pathway; isopentenyl diphosphate from 1-deoxy-D-xylulose 5-phosphate: step 6/6. In terms of biological role, catalyzes the conversion of 1-hydroxy-2-methyl-2-(E)-butenyl 4-diphosphate (HMBPP) into a mixture of isopentenyl diphosphate (IPP) and dimethylallyl diphosphate (DMAPP). Acts in the terminal step of the DOXP/MEP pathway for isoprenoid precursor biosynthesis. This chain is 4-hydroxy-3-methylbut-2-enyl diphosphate reductase, found in Prochlorococcus marinus (strain MIT 9211).